A 218-amino-acid polypeptide reads, in one-letter code: 3,4-dihydroxy-2-butanone 4-phosphate synthase (218 aa).

Residues arginine 38–glutamate 39, aspartate 43, arginine 151–threonine 155, and glutamate 175 contribute to the D-ribulose 5-phosphate site. Glutamate 39 serves as a coordination point for Mg(2+). Position 154 (histidine 154) interacts with Mg(2+).

This sequence belongs to the DHBP synthase family. In terms of assembly, homodimer. The cofactor is Mg(2+). Mn(2+) is required as a cofactor.

The catalysed reaction is D-ribulose 5-phosphate = (2S)-2-hydroxy-3-oxobutyl phosphate + formate + H(+). The protein operates within cofactor biosynthesis; riboflavin biosynthesis; 2-hydroxy-3-oxobutyl phosphate from D-ribulose 5-phosphate: step 1/1. Its function is as follows. Catalyzes the conversion of D-ribulose 5-phosphate to formate and 3,4-dihydroxy-2-butanone 4-phosphate. This chain is 3,4-dihydroxy-2-butanone 4-phosphate synthase, found in Vibrio cholerae serotype O1 (strain M66-2).